The sequence spans 290 residues: Cilia- and flagella-associated protein 298 (290 aa).

Belongs to the CFAP298 family. As to quaternary structure, interacts with dnaaf1/swt. Interacts with lrrc6/sea. Interacts with dvl (via DEP and PDZ domains). As to expression, strongly expressed in ciliated tissues of the embryonic trunk, including the pronephric ducts and spinal canal.

The protein resides in the cytoplasm. Its subcellular location is the cytoskeleton. The protein localises to the cilium basal body. Functionally, plays a role in motile cilium function, possibly by acting on outer dynein arm assembly. Seems to be important for initiation rather than maintenance of cilium motility. Required for correct positioning of cilia at the apical cell surface, suggesting an additional role in the planar cell polarity (PCP) pathway. May suppress canonical Wnt signaling activity. In Danio rerio (Zebrafish), this protein is Cilia- and flagella-associated protein 298.